Reading from the N-terminus, the 174-residue chain is Gamma-crystallin A (174 aa).

Beta/gamma crystallin 'Greek key' domains follow at residues glycine 2–serine 40 and glycine 41–proline 83. Residues tyrosine 84–serine 87 form a connecting peptide region. 2 Beta/gamma crystallin 'Greek key' domains span residues histidine 88–glutamate 128 and glycine 129–methionine 171.

It belongs to the beta/gamma-crystallin family.

Crystallins are the dominant structural components of the vertebrate eye lens. The chain is Gamma-crystallin A (Cryga) from Mus musculus (Mouse).